A 471-amino-acid polypeptide reads, in one-letter code: MPN domain-containing protein (471 aa).

Residues M1–A10 are compositionally biased toward low complexity. The interval M1–C63 is disordered. A2 is modified (N-acetylalanine). Position 8 is a phosphoserine (S8). Acidic residues predominate over residues E16–D29. The segment covering G36–C63 has biased composition (gly residues). Positions T71–H166 constitute an RAMA domain. DNA-binding residues include S123, S125, and W145. Residues T170–R229 are disordered. Residues S178 and S181 each carry the phosphoserine modification. Acidic residues predominate over residues E182–V197. The 136-residue stretch at V272–V407 folds into the MPN domain. The Zn(2+) site is built by H349, H351, and D362. The JAMM motif motif lies at H349 to D362.

The protein belongs to the peptidase M67 family. As to quaternary structure, monomer. Mainly monomoric, but when binds to dsDNA, forms homotetramer assembled into two homodimers. May interact with histones; this interaction is facilitated by dsDNA binding. In terms of processing, degraded following binding to N(6)-methyladenosine methylated DNA (m6A).

Functionally, probable protease. Acts as a sensor of N(6)-methyladenosine methylation on DNA (m6A): recognizes and binds m6A DNA, leading to its degradation. Binds only double strand DNA (dsDNA) in a sequence-independent manner. The chain is MPN domain-containing protein from Homo sapiens (Human).